The primary structure comprises 411 residues: Serpin A12 (411 aa).

The signal sequence occupies residues 1 to 20 (MNLVLGLGLFLAGLLTVKGL). N-linked (GlcNAc...) asparagine glycosylation is found at N92 and N267. The segment at 364–382 (GTEGAAGSGAQTLPMETPR) is reactive center loop.

Belongs to the serpin family. Forms a stable complex with KLK7. Glycosylation slightly decreases affinity for heparin, but otherwise has no significant effect on KLK7 inhibitory activity or thermal stability of the protein. As to expression, expressed in visceral adipose tissues.

The protein resides in the secreted. Inhibition of KLK7 is enhanced by heparin. Its function is as follows. Adipokine that modulates insulin action by specifically inhibiting its target protease KLK7 in white adipose tissues. This is Serpin A12 (Serpina12) from Rattus norvegicus (Rat).